The sequence spans 327 residues: GTPase Obg (327 aa).

Residues 1-159 enclose the Obg domain; sequence MQFIDQANII…WEVQLELKLL (159 aa). Positions 160 to 327 constitute an OBG-type G domain; the sequence is AEVGIIGLPN…SLLSEVWNRI (168 aa). ATP is bound by residues 166-173, 191-195, 213-216, 280-283, and 309-311; these read GLPNAGKS, FTTLI, DIPG, NKKE, and SSA. S173 and T193 together coordinate Mg(2+).

Belongs to the TRAFAC class OBG-HflX-like GTPase superfamily. OBG GTPase family. In terms of assembly, monomer. The cofactor is Mg(2+).

Its subcellular location is the cytoplasm. In terms of biological role, an essential GTPase which binds GTP, GDP and possibly (p)ppGpp with moderate affinity, with high nucleotide exchange rates and a fairly low GTP hydrolysis rate. Plays a role in control of the cell cycle, stress response, ribosome biogenesis and in those bacteria that undergo differentiation, in morphogenesis control. The polypeptide is GTPase Obg (Prochlorococcus marinus (strain MIT 9515)).